Here is a 556-residue protein sequence, read N- to C-terminus: Putative solute carrier family 22 member 31 (556 aa).

Over Met1 to Ser23 the chain is Cytoplasmic. A helical transmembrane segment spans residues Ala24 to Ala44. The Extracellular portion of the chain corresponds to Gln45–Lys128. The helical transmembrane segment at Val129–Ala149 threads the bilayer. Residues Gly150–Arg157 lie on the Cytoplasmic side of the membrane. The helical transmembrane segment at Ala158 to Ala178 threads the bilayer. The Extracellular portion of the chain corresponds to Ser179–Thr182. Residues Leu183–Leu203 form a helical membrane-spanning segment. Residues Ala204–Ser218 are Cytoplasmic-facing. Residues Met219–Val239 traverse the membrane as a helical segment. The Extracellular segment spans residues Gln240 to Gln246. A helical transmembrane segment spans residues Gly247–Pro267. At Glu268 to Gly339 the chain is on the cytoplasmic side. A helical membrane pass occupies residues Leu340–Arg357. At Arg358–Thr366 the chain is on the extracellular side. Residues Phe367–Leu387 traverse the membrane as a helical segment. Residues Thr388–Arg395 lie on the Cytoplasmic side of the membrane. Residues Pro396 to Ala416 form a helical membrane-spanning segment. Residues Gln417–Pro420 are Extracellular-facing. The helical transmembrane segment at Gly421–Leu441 threads the bilayer. The Cytoplasmic portion of the chain corresponds to Ser442–Glu448. The chain crosses the membrane as a helical span at residues Val449–Gly469. The Extracellular portion of the chain corresponds to Gln470 to Gly483. A helical membrane pass occupies residues Phe484–Leu504. The Cytoplasmic portion of the chain corresponds to Leu505–His556. Residues Arg524 to His556 form a disordered region.

This sequence belongs to the major facilitator (TC 2.A.1) superfamily. Organic cation transporter (TC 2.A.1.19) family.

The protein resides in the membrane. Its function is as follows. Organic anion transporter that mediates the uptake of ions. In Homo sapiens (Human), this protein is Putative solute carrier family 22 member 31.